Reading from the N-terminus, the 626-residue chain is Phosphomethylpyrimidine synthase (626 aa).

The segment at Met1–Gln22 is disordered. The span at Leu10–Gln22 shows a compositional bias: polar residues. Substrate is bound by residues Asn232, Met261, Tyr290, His326, Ser346–Gly348, Asp387–Arg390, and Glu426. His430 provides a ligand contact to Zn(2+). Tyr453 provides a ligand contact to substrate. His494 contacts Zn(2+). The [4Fe-4S] cluster site is built by Cys574, Cys577, and Cys582.

Belongs to the ThiC family. As to quaternary structure, homodimer. It depends on [4Fe-4S] cluster as a cofactor.

It catalyses the reaction 5-amino-1-(5-phospho-beta-D-ribosyl)imidazole + S-adenosyl-L-methionine = 4-amino-2-methyl-5-(phosphooxymethyl)pyrimidine + CO + 5'-deoxyadenosine + formate + L-methionine + 3 H(+). It participates in cofactor biosynthesis; thiamine diphosphate biosynthesis. Functionally, catalyzes the synthesis of the hydroxymethylpyrimidine phosphate (HMP-P) moiety of thiamine from aminoimidazole ribotide (AIR) in a radical S-adenosyl-L-methionine (SAM)-dependent reaction. This is Phosphomethylpyrimidine synthase from Pseudomonas putida (strain ATCC 700007 / DSM 6899 / JCM 31910 / BCRC 17059 / LMG 24140 / F1).